The chain runs to 210 residues: N-(5'-phosphoribosyl)anthranilate isomerase (210 aa).

The protein belongs to the TrpF family.

The enzyme catalyses N-(5-phospho-beta-D-ribosyl)anthranilate = 1-(2-carboxyphenylamino)-1-deoxy-D-ribulose 5-phosphate. It functions in the pathway amino-acid biosynthesis; L-tryptophan biosynthesis; L-tryptophan from chorismate: step 3/5. The protein is N-(5'-phosphoribosyl)anthranilate isomerase of Magnetococcus marinus (strain ATCC BAA-1437 / JCM 17883 / MC-1).